The chain runs to 252 residues: 5-oxoprolinase subunit A (252 aa).

The protein belongs to the LamB/PxpA family. As to quaternary structure, forms a complex composed of PxpA, PxpB and PxpC.

It catalyses the reaction 5-oxo-L-proline + ATP + 2 H2O = L-glutamate + ADP + phosphate + H(+). Catalyzes the cleavage of 5-oxoproline to form L-glutamate coupled to the hydrolysis of ATP to ADP and inorganic phosphate. The polypeptide is 5-oxoprolinase subunit A (Mycobacterium avium (strain 104)).